Here is a 456-residue protein sequence, read N- to C-terminus: Chromosomal replication initiator protein DnaA (456 aa).

The interval 1–79 (MSQEIWADVL…QHPQVSFQVL (79 aa)) is domain I, interacts with DnaA modulators. A domain II region spans residues 79–112 (LPASQDALLLPSDPPPAPISPGRAPAPPPADNRK). A disordered region spans residues 89–112 (PSDPPPAPISPGRAPAPPPADNRK). A compositionally biased stretch (pro residues) spans 90-108 (SDPPPAPISPGRAPAPPPA). A domain III, AAA+ region region spans residues 113 to 329 (TLNPKYTFEN…GALMRVVAFS (217 aa)). 4 residues coordinate ATP: G157, G159, K160, and T161. The segment at 330-456 (SLNNVPFSRA…KGLEDEDSRA (127 aa)) is domain IV, binds dsDNA.

The protein belongs to the DnaA family. As to quaternary structure, oligomerizes as a right-handed, spiral filament on DNA at oriC.

It is found in the cytoplasm. Functionally, plays an essential role in the initiation and regulation of chromosomal replication. ATP-DnaA binds to the origin of replication (oriC) to initiate formation of the DNA replication initiation complex once per cell cycle. Binds the DnaA box (a 9 base pair repeat at the origin) and separates the double-stranded (ds)DNA. Forms a right-handed helical filament on oriC DNA; dsDNA binds to the exterior of the filament while single-stranded (ss)DNA is stabiized in the filament's interior. The ATP-DnaA-oriC complex binds and stabilizes one strand of the AT-rich DNA unwinding element (DUE), permitting loading of DNA polymerase. After initiation quickly degrades to an ADP-DnaA complex that is not apt for DNA replication. Binds acidic phospholipids. In Deinococcus deserti (strain DSM 17065 / CIP 109153 / LMG 22923 / VCD115), this protein is Chromosomal replication initiator protein DnaA.